The sequence spans 203 residues: Auxin-induced protein 22E (203 aa).

The EAR-like (transcriptional repression) signature appears at 15-19 (LRLGL). Residues 15-77 (LRLGLPGSDE…DHNEDSVQPA (63 aa)) are disordered. Residues 43-52 (SSPELEESRC) are compositionally biased toward basic and acidic residues. Over residues 58-67 (SDSSDSTTTS) the composition is skewed to low complexity. Positions 107–199 (GMYLKVSMAG…RIIKGSEAKG (93 aa)) constitute a PB1 domain.

Belongs to the Aux/IAA family. As to quaternary structure, homodimers and heterodimers.

It localises to the nucleus. Its function is as follows. Aux/IAA proteins are short-lived transcriptional factors that function as repressors of early auxin response genes at low auxin concentrations. Repression is thought to result from the interaction with auxin response factors (ARFs), proteins that bind to the auxin-responsive promoter element (AuxRE). Formation of heterodimers with ARF proteins may alter their ability to modulate early auxin response genes expression. The chain is Auxin-induced protein 22E (AUX22E) from Vigna radiata var. radiata (Mung bean).